Here is a 207-residue protein sequence, read N- to C-terminus: ATP synthase subunit b 2 (207 aa).

A helical transmembrane segment spans residues 53-72 (TYASQLLWLVITFSVFYLLM).

Belongs to the ATPase B chain family. As to quaternary structure, F-type ATPases have 2 components, F(1) - the catalytic core - and F(0) - the membrane proton channel. F(1) has five subunits: alpha(3), beta(3), gamma(1), delta(1), epsilon(1). F(0) has three main subunits: a(1), b(2) and c(10-14). The alpha and beta chains form an alternating ring which encloses part of the gamma chain. F(1) is attached to F(0) by a central stalk formed by the gamma and epsilon chains, while a peripheral stalk is formed by the delta and b chains.

Its subcellular location is the cell inner membrane. F(1)F(0) ATP synthase produces ATP from ADP in the presence of a proton or sodium gradient. F-type ATPases consist of two structural domains, F(1) containing the extramembraneous catalytic core and F(0) containing the membrane proton channel, linked together by a central stalk and a peripheral stalk. During catalysis, ATP synthesis in the catalytic domain of F(1) is coupled via a rotary mechanism of the central stalk subunits to proton translocation. In terms of biological role, component of the F(0) channel, it forms part of the peripheral stalk, linking F(1) to F(0). The b'-subunit is a diverged and duplicated form of b found in plants and photosynthetic bacteria. The sequence is that of ATP synthase subunit b 2 (atpF2) from Rhizobium etli (strain CIAT 652).